A 95-amino-acid chain; its full sequence is Cliotide T5 (95 aa).

Positions 1-30 (GIPCGESCVFIPCISTVIGCSCKNKVCYRN) form a cross-link, cyclopeptide (Gly-Asn). 3 disulfides stabilise this stretch: cysteine 4–cysteine 20, cysteine 8–cysteine 22, and cysteine 13–cysteine 27. The propeptide at 31–95 (HVIAAEAKTM…KDHLKMSITN (65 aa)) is removed in mature form.

Post-translationally, contains 3 disulfide bonds. In terms of processing, this is a cyclic peptide. Expressed in stem, shoot, root, leaf, pod and nodule but not in flower and seed (at protein level).

In terms of biological role, probably participates in a plant defense mechanism. This Clitoria ternatea (Butterfly pea) protein is Cliotide T5.